Reading from the N-terminus, the 1015-residue chain is GTPase-activating Rap/Ran-GAP domain-like protein 3 (1015 aa).

The Rap-GAP domain maps to 200–416 (LLVLEEQEGS…RTLDMLIRSL (217 aa)). Residues 498-812 (PYDIVCGDSW…QLTASRSDIY (315 aa)) enclose the CNH domain. 2 disordered regions span residues 821–842 (SASN…PTGY) and 924–1004 (ELLG…FTFS). The segment covering 823-835 (SNCSSRDTSSQSS) has biased composition (low complexity). The segment covering 949–959 (KNKEEEQKRTA) has biased composition (basic and acidic residues).

Belongs to the GARNL3 family.

This is GTPase-activating Rap/Ran-GAP domain-like protein 3 (garnl3) from Danio rerio (Zebrafish).